A 231-amino-acid chain; its full sequence is Thrombin-like enzyme leucurobin (231 aa).

One can recognise a Peptidase S1 domain in the interval 1 to 223; the sequence is VIGGDECDIN…YLPWIQSIIA (223 aa). 6 cysteine pairs are disulfide-bonded: Cys-7–Cys-139, Cys-26–Cys-42, Cys-74–Cys-230, Cys-118–Cys-184, Cys-150–Cys-163, and Cys-174–Cys-199. Catalysis depends on charge relay system residues His-41 and Asp-86. N-linked (GlcNAc...) asparagine glycosylation is present at Asn-146. The active-site Charge relay system is Ser-178. Asn-225 is a glycosylation site (N-linked (GlcNAc...) asparagine).

It belongs to the peptidase S1 family. Snake venom subfamily. In terms of assembly, monomer. In terms of processing, glycosylated. Expressed by the venom gland.

It localises to the secreted. The catalysed reaction is Selective cleavage of Arg-|-Xaa bond in fibrinogen, to form fibrin, and release fibrinopeptide A. The specificity of further degradation of fibrinogen varies with species origin of the enzyme.. With respect to regulation, inhibited by PMSF and benzamidine. Its clotting effect is strongly inhibited by antibothropic serum. Is not inhibited by heparin. Thrombin-like snake venom serine protease that cleaves Arg-Gly bonds in alpha-chain of fibrinogen (FGA). Induces temporary episodes of opisthotonos and rapid rolling around the long axis of the animal (gyroxin-like effect), when injected into the tail veins of mice (0.143 ug/g mouse). The sequence is that of Thrombin-like enzyme leucurobin from Bothrops leucurus (Whitetail lancehead).